Consider the following 473-residue polypeptide: MSSSVPNSDRKIVTGPAGYILEDVPHFSDDFPDHPTYPNPLQDNAAYSVVKQYFVDEDDTVPQKIVVHPDSPRGTHFRRAGPRQRVYFESDDVLACIVTCGGLCPGLNTVIREIVCGLSYMYGVKRILGIDGGYRGFYARNTIHLDLKTVNDIHRSGGTILGTSRGGHNTTKIVDSIQDRGINQVYIIGGDGSQKGAAAIFEEIRKRKLKVAVAGIPKTIDNDIPIIDRSFGFDTAVEEAQRAINAAHVEATSFENGIGLVKLMGRYSGFIAMHATLASRDVDCCLIPESPFFLEGSGGLFEFIDKRLKESGHMVIVIAEGAGQDLLSESMKESTTLKDASGNKLLQDIGLWISQRIKDHFAKKMTLTLKYIDPTYMIRAVPSNASDNVCCTLLAQSAVHGVMAGYNGFTVGLVNGRHTYIPFNRITEKQNKVVITDRMWARLLSSTNQPSFMKQADKIHSNQLVGEPGTMKW.

A Phosphoserine modification is found at S71. Residues G102, 165-166 (RG), and 190-193 (GDGS) contribute to the ATP site. Residue D191 coordinates Mg(2+). Residues 219–221 (TID), 264–266 (MGR), E320, and 376–379 (YMIR) each bind substrate. Catalysis depends on D221, which acts as the Proton acceptor.

It belongs to the phosphofructokinase type A (PFKA) family. PPi-dependent PFK group II subfamily. Atypical ATP-dependent clade 'X' sub-subfamily. Homotetramer. Mg(2+) serves as cofactor. In terms of tissue distribution, expressed in roots, leaves, stems and flowers.

The protein resides in the cytoplasm. It catalyses the reaction beta-D-fructose 6-phosphate + ATP = beta-D-fructose 1,6-bisphosphate + ADP + H(+). The protein operates within carbohydrate degradation; glycolysis; D-glyceraldehyde 3-phosphate and glycerone phosphate from D-glucose: step 3/4. Its activity is regulated as follows. Allosterically activated by AMP. Functionally, catalyzes the phosphorylation of D-fructose 6-phosphate to fructose 1,6-bisphosphate by ATP, the first committing step of glycolysis. The protein is ATP-dependent 6-phosphofructokinase 1 of Arabidopsis thaliana (Mouse-ear cress).